We begin with the raw amino-acid sequence, 827 residues long: Spastin (827 aa).

Residues 1 to 13 are compositionally biased toward polar residues; sequence MVRNKYTLTTAGK. The segment at 1 to 58 is disordered; that stretch reads MVRNKYTLTTAGKSPSKKSRTGSLSKQHDATGDDDGETGTLDGSGSAAGSPVGGGTDA. Topologically, residues 1–79 are cytoplasmic; sequence MVRNKYTLTT…KQNLYIISFP (79 aa). Residues 38 to 50 are compositionally biased toward low complexity; it reads TGTLDGSGSAAGS. Positions 80–100 form an intramembrane region, helical; that stretch reads VIFVFNVLRSLLYQLFIVFRY. Residues 101–827 lie on the Cytoplasmic side of the membrane; it reads VYNFTTKVVY…WLQDFGDVTL (727 aa). Disordered regions lie at residues 127–190 and 207–229; these read QHGH…AHPL and SIQRSASGSQVGPGDPLLAKQKH. The segment covering 129–141 has biased composition (basic residues); it reads GHHHHHHHRHSSH. The segment covering 142–190 has biased composition (low complexity); that stretch reads SIHSTAAAHQLQQHQQQQQHQYSLLQQEQHGVTEPQQQQQQQHQAAHPL. In terms of domain architecture, MIT spans 231–306; it reads HRRAFEYISK…SMARDRLQFL (76 aa). Disordered regions lie at residues 358–381, 398–433, and 476–526; these read HHPARGTAASSRPTTAATAPATPS, VGYKRPGNLGVMNKSQTLPRSMGGTRTTPTGTGGAG, and VSIP…PQIS. Residues 364–381 are compositionally biased toward low complexity; it reads TAASSRPTTAATAPATPS. Low complexity-rich tracts occupy residues 476–486 and 510–524; these read VSIPIPGSSPV and QQPQQPQQQQQQQPQ. 592 to 599 lines the ATP pocket; sequence GPPGNGKT.

This sequence belongs to the AAA ATPase family. Spastin subfamily. As to quaternary structure, homohexamer. The homohexamer is stabilized by ATP-binding. The homohexamer may adopt a ring conformation through which microtubules pass prior to being severed. Interacts with microtubules.

The protein localises to the membrane. It is found in the cytoplasm. It localises to the cytoskeleton. Its subcellular location is the microtubule organizing center. The protein resides in the centrosome. It carries out the reaction n ATP + n H2O + a microtubule = n ADP + n phosphate + (n+1) alpha/beta tubulin heterodimers.. ATP-dependent microtubule severing protein. Microtubule severing may promote reorganization of cellular microtubule arrays and the release of microtubules from the microtubule organizing center following nucleation. This Anopheles gambiae (African malaria mosquito) protein is Spastin (spas).